The following is a 352-amino-acid chain: Holliday junction branch migration complex subunit RuvB (352 aa).

Positions 13–201 (IPRSRKELRL…FGLCHKIEFY (189 aa)) are large ATPase domain (RuvB-L). ATP contacts are provided by residues Leu-37, Arg-41, Gly-82, Lys-85, Thr-86, Thr-87, 148–150 (EDF), Arg-191, Tyr-201, and Arg-238. Thr-86 serves as a coordination point for Mg(2+). A small ATPAse domain (RuvB-S) region spans residues 202-273 (SNDELKQIIF…IIEKALDSQK (72 aa)). The head domain (RuvB-H) stretch occupies residues 276 to 352 (NRGLDNVDRK…KYISSNNEKY (77 aa)). Residues Arg-330 and Arg-335 each coordinate DNA.

It belongs to the RuvB family. Homohexamer. Forms an RuvA(8)-RuvB(12)-Holliday junction (HJ) complex. HJ DNA is sandwiched between 2 RuvA tetramers; dsDNA enters through RuvA and exits via RuvB. An RuvB hexamer assembles on each DNA strand where it exits the tetramer. Each RuvB hexamer is contacted by two RuvA subunits (via domain III) on 2 adjacent RuvB subunits; this complex drives branch migration. In the full resolvosome a probable DNA-RuvA(4)-RuvB(12)-RuvC(2) complex forms which resolves the HJ.

Its subcellular location is the cytoplasm. The enzyme catalyses ATP + H2O = ADP + phosphate + H(+). The RuvA-RuvB-RuvC complex processes Holliday junction (HJ) DNA during genetic recombination and DNA repair, while the RuvA-RuvB complex plays an important role in the rescue of blocked DNA replication forks via replication fork reversal (RFR). RuvA specifically binds to HJ cruciform DNA, conferring on it an open structure. The RuvB hexamer acts as an ATP-dependent pump, pulling dsDNA into and through the RuvAB complex. RuvB forms 2 homohexamers on either side of HJ DNA bound by 1 or 2 RuvA tetramers; 4 subunits per hexamer contact DNA at a time. Coordinated motions by a converter formed by DNA-disengaged RuvB subunits stimulates ATP hydrolysis and nucleotide exchange. Immobilization of the converter enables RuvB to convert the ATP-contained energy into a lever motion, pulling 2 nucleotides of DNA out of the RuvA tetramer per ATP hydrolyzed, thus driving DNA branch migration. The RuvB motors rotate together with the DNA substrate, which together with the progressing nucleotide cycle form the mechanistic basis for DNA recombination by continuous HJ branch migration. Branch migration allows RuvC to scan DNA until it finds its consensus sequence, where it cleaves and resolves cruciform DNA. The chain is Holliday junction branch migration complex subunit RuvB from Prochlorococcus marinus (strain MIT 9515).